A 299-amino-acid polypeptide reads, in one-letter code: Methylsterol monooxygenase 1-2 (299 aa).

3 consecutive transmembrane segments (helical) span residues 39–59 (CHNI…LVFI), 96–116 (FILV…MIEI), and 118–138 (SGLP…YFLV). A Fatty acid hydroxylase domain is found at 132–267 (LVVYFLVEDY…FTYCDYIYGT (136 aa)). The Histidine box-1 motif lies at 147–151 (HRFFH). The short motif at 160 to 164 (HHIHH) is the Histidine box-2 element. The helical transmembrane segment at 189 to 209 (TFLGPAIAPGHMITFWLWIAL) threads the bilayer. A Histidine box-3 motif is present at residues 239-245 (YHDYHHY).

Belongs to the sterol desaturase family. In terms of assembly, interacts with ACBP1. The cofactor is Fe cation. As to expression, expressed in embryo sacs, pollen and trichomes. Observed in leaves, roots, siliques and flowers.

It localises to the endoplasmic reticulum membrane. It carries out the reaction 4,4-dimethyl-5alpha-cholest-7-en-3beta-ol + 6 Fe(II)-[cytochrome b5] + 3 O2 + 5 H(+) = 4alpha-carboxy-4beta-methyl-5alpha-cholest-7-ene-3beta-ol + 6 Fe(III)-[cytochrome b5] + 4 H2O. The catalysed reaction is 24-methylenecycloartanol + 6 Fe(II)-[cytochrome b5] + 3 O2 + 5 H(+) = 4alpha-carboxy-4beta,14alpha-dimethyl-9beta,19-cyclo-5alpha-ergost-24(24(1))-en-3beta-ol + 6 Fe(III)-[cytochrome b5] + 4 H2O. Non-heme iron oxygenase involved in sterols biosynthesis by catalyzing the removal of the first methyl group at the C-4 position. 4,4-dimethyl-9-beta,19-cyclopropylsterols such as 24-methylenecycloartanol are the preferred substrates. Acts as a rate-limiting enzyme in the sterol pathway via interaction with ACBP1; sterols serve as lipid modulators for gene expression of homeodomain-leucine zipper IV transcription factors. Together with SMO1-1, involved in the maintenance of sterol composition to balance auxin and cytokinin activities during embryogenesis. This Arabidopsis thaliana (Mouse-ear cress) protein is Methylsterol monooxygenase 1-2.